Consider the following 229-residue polypeptide: DNA mismatch repair protein MutH (229 aa).

This sequence belongs to the MutH family.

It is found in the cytoplasm. Its function is as follows. Sequence-specific endonuclease that cleaves unmethylated GATC sequences. It is involved in DNA mismatch repair. This Escherichia coli O45:K1 (strain S88 / ExPEC) protein is DNA mismatch repair protein MutH.